A 617-amino-acid chain; its full sequence is Type IV inositol polyphosphate 5-phosphatase 6 (617 aa).

Disordered regions lie at residues 30-62 (EFQADDPSSAGIEVEHRSSFSAEKAPSTIKNTK) and 241-330 (DFDP…VLYS). Over residues 242-253 (FDPSFRGSSSSH) the composition is skewed to low complexity. A compositionally biased stretch (basic and acidic residues) spans 254–290 (RPSDYSRRPSDYSRRPSDYSRRPSDYSRRPSDSRPSD). Low complexity predominate over residues 291–311 (YSRPSDYYSRPSDYSRPSDFS). 2 catalytic regions span residues 458 to 473 (DRVIWLGDLNYRIALS) and 538 to 553 (KRRTPAWCDRILWFGE).

The protein belongs to the inositol polyphosphate 5-phosphatase family. In terms of tissue distribution, broadly expressed in emerging organs. Mostly localized in procambium of growing organs. Restricted to vascular differentiating cells of young organs.

The enzyme catalyses a 1,2-diacyl-sn-glycero-3-phospho-(1D-myo-inositol-4,5-bisphosphate) + H2O = a 1,2-diacyl-sn-glycero-3-phospho-(1D-myo-inositol 4-phosphate) + phosphate. The catalysed reaction is a 1,2-diacyl-sn-glycero-3-phospho-(1D-myo-inositol-3,4,5-trisphosphate) + H2O = a 1,2-diacyl-sn-glycero-3-phospho-(1D-myo-inositol-3,4-bisphosphate) + phosphate. In terms of biological role, has phosphatase activity toward PtdIns(4,5)P2 and PtdIns(3,4,5)P3. Required for the patterning of procambium and during the differentiation of vascular tissues. Acts before the acquisition of preprocambial identity. Seems to be also involved in the abscisic acid (ABA) signaling pathway. Acts redundantly with CVL1 for maintaining vascular continuity. Regulates phosphoinositide-dependent VAN3 localization. The polypeptide is Type IV inositol polyphosphate 5-phosphatase 6 (Arabidopsis thaliana (Mouse-ear cress)).